Reading from the N-terminus, the 100-residue chain is NADH-quinone oxidoreductase subunit K 1 (100 aa).

The next 3 helical transmembrane spans lie at 3 to 23 (IIKA…LGVI), 28 to 48 (LITV…ALVA), and 60 to 80 (IFAF…LGLI).

Belongs to the complex I subunit 4L family. NDH-1 is composed of 14 different subunits. Subunits NuoA, H, J, K, L, M, N constitute the membrane sector of the complex.

It localises to the cell inner membrane. It catalyses the reaction a quinone + NADH + 5 H(+)(in) = a quinol + NAD(+) + 4 H(+)(out). NDH-1 shuttles electrons from NADH, via FMN and iron-sulfur (Fe-S) centers, to quinones in the respiratory chain. The immediate electron acceptor for the enzyme in this species is believed to be ubiquinone. Couples the redox reaction to proton translocation (for every two electrons transferred, four hydrogen ions are translocated across the cytoplasmic membrane), and thus conserves the redox energy in a proton gradient. This is NADH-quinone oxidoreductase subunit K 1 from Aquifex aeolicus (strain VF5).